We begin with the raw amino-acid sequence, 347 residues long: Histone deacetylase 11 (347 aa).

Positions 14–318 (TRWPIVYSPR…ARIIADSILN (305 aa)) are histone deacetylase. The active site involves H143.

This sequence belongs to the histone deacetylase family. In terms of assembly, interacts with HDAC6.

Its subcellular location is the nucleus. The catalysed reaction is N(6)-acetyl-L-lysyl-[histone] + H2O = L-lysyl-[histone] + acetate. Functionally, responsible for the deacetylation of lysine residues on the N-terminal part of the core histones (H2A, H2B, H3 and H4). Histone deacetylation gives a tag for epigenetic repression and plays an important role in transcriptional regulation, cell cycle progression and developmental events. Histone deacetylases act via the formation of large multiprotein complexes. This is Histone deacetylase 11 (HDAC11) from Macaca fascicularis (Crab-eating macaque).